Consider the following 235-residue polypeptide: Uracil-DNA glycosylase (235 aa).

D71 functions as the Proton acceptor in the catalytic mechanism.

This sequence belongs to the uracil-DNA glycosylase (UDG) superfamily. UNG family.

Its subcellular location is the cytoplasm. It carries out the reaction Hydrolyzes single-stranded DNA or mismatched double-stranded DNA and polynucleotides, releasing free uracil.. Excises uracil residues from the DNA which can arise as a result of misincorporation of dUMP residues by DNA polymerase or due to deamination of cytosine. The polypeptide is Uracil-DNA glycosylase (Campylobacter hominis (strain ATCC BAA-381 / DSM 21671 / CCUG 45161 / LMG 19568 / NCTC 13146 / CH001A)).